A 504-amino-acid polypeptide reads, in one-letter code: MMTTSLIWGIAIAACCCLWLILGIRRRQTGEPPLENGLIPYLGCALQFGANPLEFLRANQRKHGHVFTCKLMGKYVHFITNPLSYHKVLCHGKYFDWKKFHFATSAKAFGHRSIDPMDGNTTENINDTFIKTLQGHALNSLTESMMENLQRIMRPPVSSNSKTAAWVTEGMYSFCYRVMFEAGYLTIFGRDLTRRDTQKAHILNNLDNFKQFDKVFPALVAGLPIHMFRTAHNAREKLAESLRHENLQKRESISELISLRMFLNDTLSTFDDLEKAKTHLVVLWASQANTIPATFWSLFQMIRNPEAMKAATEEVKRTLENAGQKVSLEGNPICLSQAELNDLPVLDSIIKESLRLSSASLNIRTAKEDFTLHLEDGSYNIRKDDIIALYPQLMHLDPEIYPDPLTFKYDRYLDENGKTKTTFYCNGLKLKYYYMPFGSGATICPGRLFAIHEIKQFLILMLSYFELELIEGQAKCPPLDQSRAGLGILPPLNDIEFKYKFKHL.

A helical membrane pass occupies residues 4-24 (TSLIWGIAIAACCCLWLILGI). A heme-binding site is contributed by Cys-444.

The protein belongs to the cytochrome P450 family. Requires heme as cofactor. In terms of tissue distribution, detected in liver.

The protein resides in the endoplasmic reticulum membrane. Its subcellular location is the microsome membrane. The enzyme catalyses cholesterol + reduced [NADPH--hemoprotein reductase] + O2 = 7alpha-hydroxycholesterol + oxidized [NADPH--hemoprotein reductase] + H2O + H(+). It carries out the reaction 4beta-hydroxycholesterol + reduced [NADPH--hemoprotein reductase] + O2 = 4beta,7alpha-dihydroxycholesterol + oxidized [NADPH--hemoprotein reductase] + H2O + H(+). It catalyses the reaction lathosterol + reduced [NADPH--hemoprotein reductase] + O2 = 7alpha,8alpha-epoxy-5alpha-cholestan-3beta-ol + oxidized [NADPH--hemoprotein reductase] + H2O + H(+). The catalysed reaction is lathosterol + reduced [NADPH--hemoprotein reductase] + O2 = 5alpha-cholestan-7-oxo-3beta-ol + oxidized [NADPH--hemoprotein reductase] + H2O + H(+). The enzyme catalyses 7-dehydrocholesterol + reduced [NADPH--hemoprotein reductase] + O2 = 7-oxocholesterol + oxidized [NADPH--hemoprotein reductase] + H2O + H(+). It carries out the reaction (24S)-hydroxycholesterol + reduced [NADPH--hemoprotein reductase] + O2 = (24S)-7alpha-dihydroxycholesterol + oxidized [NADPH--hemoprotein reductase] + H2O + H(+). It catalyses the reaction (24R)-hydroxycholesterol + reduced [NADPH--hemoprotein reductase] + O2 = (24R)-7alpha-dihydroxycholesterol + oxidized [NADPH--hemoprotein reductase] + H2O + H(+). The protein operates within lipid metabolism; bile acid biosynthesis. Its pathway is steroid metabolism; cholesterol degradation. Its function is as follows. A cytochrome P450 monooxygenase involved in the metabolism of endogenous cholesterol and its oxygenated derivatives (oxysterols). Mechanistically, uses molecular oxygen inserting one oxygen atom into a substrate, and reducing the second into a water molecule, with two electrons provided by NADPH via cytochrome P450 reductase (CPR; NADPH-ferrihemoprotein reductase). Functions as a critical regulatory enzyme of bile acid biosynthesis and cholesterol homeostasis. Catalyzes the hydroxylation of carbon hydrogen bond at 7-alpha position of cholesterol, a rate-limiting step in cholesterol catabolism and bile acid biosynthesis. 7-alpha hydroxylates several oxysterols, including 4beta-hydroxycholesterol and 24-hydroxycholesterol. Catalyzes the oxidation of the 7,8 double bond of 7-dehydrocholesterol and lathosterol with direct and predominant formation of the 7-keto derivatives. The polypeptide is Cytochrome P450 7A1 (Homo sapiens (Human)).